The primary structure comprises 240 residues: Adenosine 5'-phosphosulfate reductase (240 aa).

[4Fe-4S] cluster-binding residues include Cys125, Cys126, Cys208, and Cys211. Cys234 acts as the Nucleophile; cysteine thiosulfonate intermediate in catalysis.

This sequence belongs to the PAPS reductase family. CysH subfamily. [4Fe-4S] cluster serves as cofactor.

The protein resides in the cytoplasm. It catalyses the reaction [thioredoxin]-disulfide + sulfite + AMP + 2 H(+) = adenosine 5'-phosphosulfate + [thioredoxin]-dithiol. Its pathway is sulfur metabolism; hydrogen sulfide biosynthesis; sulfite from sulfate. In terms of biological role, catalyzes the formation of sulfite from adenosine 5'-phosphosulfate (APS) using thioredoxin as an electron donor. This is Adenosine 5'-phosphosulfate reductase from Oceanobacillus iheyensis (strain DSM 14371 / CIP 107618 / JCM 11309 / KCTC 3954 / HTE831).